The following is a 345-amino-acid chain: Papain (345 aa).

The signal sequence occupies residues 1–18 (MAMIPSISKLLFVAICLF). Positions 19–133 (VYMGLSFGDF…EEVLNDGDVN (115 aa)) are cleaved as a propeptide — activation peptide. 3 cysteine pairs are disulfide-bonded: cysteine 155–cysteine 196, cysteine 189–cysteine 228, and cysteine 286–cysteine 333. The active site involves cysteine 158. Cysteine 158 contacts E64. Residue cysteine 158 coordinates leupeptin. Catalysis depends on residues histidine 292 and asparagine 308.

This sequence belongs to the peptidase C1 family.

The enzyme catalyses Hydrolysis of proteins with broad specificity for peptide bonds, but preference for an amino acid bearing a large hydrophobic side chain at the P2 position. Does not accept Val in P1'.. With respect to regulation, repressed by the active-site-directed cysteine protease inhibitor E64 (L-trans-epoxysuccinyl-leucylamide-(4-guanido)-butane) produced by Aspergillus japonicus. Inhibited by the inhibitor of cysteine proteases from Trypanosoma brucei (TbICP, rhodesain) and Colocasia esculenta cv. Kaohsiung no. 1 (CeCPI, tarocystatin). Repressed by leupeptin, a peptidic cysteine, serine and threonine protease inhibitor. Its function is as follows. Cysteine proteinase with a high level of diversity in substrate specificity, an amino acid bearing a large hydrophobic side chain at the P2 position is preferred. This chain is Papain, found in Carica papaya (Papaya).